The chain runs to 478 residues: MAPLRPLLILALLAWVALADQESCKGRCTEGFNVDKKCQCDELCSYYQSCCTDYTAECKPQVTRGDVFTMPEDEYTVYDDGEEKNNATVHEQVGGPSLTSDLQAQSKGNPEQTPVLKPEEEAPAPEVGASKPEGIDSRPETLHPGRPQPPAEEELCSGKPFDAFTDLKNGSLFAFRGQYCYELDEKAVRPGYPKLIRDVWGIEGPIDAAFTRINCQGKTYLFKGSQYWRFEDGVLDPDYPRNISDGFDGIPDNVDAALALPAHSYSGRERVYFFKGKQYWEYQFQHQPSQEECEGSSLSAVFEHFAMMQRDSWEDIFELLFWGRTSAGTRQPQFISRDWHGVPGQVDAAMAGRIYISGMAPRPSLAKKQRFRHRNRKGYRSQRGHSRGRNQNSRRPSRATWLSLFSSEESNLGANNYDDYRMDWLVPATCEPIQSVFFFSGDKYYRVNLRTRRVDTVDPPYPRSIAQYWLGCPAPGHL.

Positions 1–19 are cleaved as a signal peptide; that stretch reads MAPLRPLLILALLAWVALA. Residues 20-63 form the SMB domain; sequence DQESCKGRCTEGFNVDKKCQCDELCSYYQSCCTDYTAECKPQVT. Disulfide bonds link cysteine 24–cysteine 28, cysteine 24–cysteine 40, cysteine 28–cysteine 58, cysteine 38–cysteine 40, cysteine 38–cysteine 51, cysteine 44–cysteine 50, and cysteine 51–cysteine 58. The Cell attachment site signature appears at 64–66; that stretch reads RGD. Threonine 69 is subject to Phosphothreonine; by CK2; in vitro. The residue at position 75 (tyrosine 75) is a Sulfotyrosine. The residue at position 76 (threonine 76) is a Phosphothreonine; by CK2; in vitro. The residue at position 78 (tyrosine 78) is a Sulfotyrosine. The N-linked (GlcNAc...) (complex) asparagine glycan is linked to asparagine 86. Residues 91–158 form a disordered region; sequence EQVGGPSLTS…PPAEEELCSG (68 aa). Polar residues predominate over residues 97–112; sequence SLTSDLQAQSKGNPEQ. 2 positions are modified to phosphoserine: serine 130 and serine 137. Over residues 133 to 143 the composition is skewed to basic and acidic residues; it reads EGIDSRPETLH. 3 Hemopexin repeats span residues 158–202, 203–250, and 251–305; these read GKPF…VWGI, EGPI…FDGI, and PDNV…FEHF. Asparagine 169 is a glycosylation site (N-linked (GlcNAc...) asparagine). The N-linked (GlcNAc...) (complex) asparagine glycan is linked to asparagine 242. Tyrosine 282 is subject to Sulfotyrosine. Cysteine 293 and cysteine 430 are disulfide-bonded. Serine 312 is subject to Phosphoserine. The heparin-binding stretch occupies residues 362–395; it reads RPSLAKKQRFRHRNRKGYRSQRGHSRGRNQNSRR. Residues 364–398 form a disordered region; it reads SLAKKQRFRHRNRKGYRSQRGHSRGRNQNSRRPSR. Basic residues predominate over residues 365–388; it reads LAKKQRFRHRNRKGYRSQRGHSRG. Serine 397 carries the post-translational modification Phosphoserine; by PKA. Tyrosine 417 and tyrosine 420 each carry sulfotyrosine. Residues 419–472 form a Hemopexin 4 repeat; the sequence is DYRMDWLVPATCEPIQSVFFFSGDKYYRVNLRTRRVDTVDPPYPRSIAQYWLGC.

As to quaternary structure, exists in two forms: a single chain 75 kDa form (V75) and a clipped form composed of two chains (65 kDa and 10 kDa) (V65+V10) which are held together by a disulfide bond. Interacts with SERPINE1/PAI1, insulin and C1QBP. (Microbial infection) Interacts (via hemopexin repeat 2) with P.falciparum (isolate CDC / Honduras) SERA5 P47 (via C-terminus); may form heterotetramers of two VTN and SERA5 P47 heterodimers; the interaction may protect merozoites from phagocytosis by host monocytes; VTN glycosylation appears to be dispensable for the interaction. Post-translationally, sulfated on tyrosine residues. N- and O-glycosylated. In terms of processing, phosphorylation on Thr-69 and Thr-76 favors cell adhesion and spreading. Post-translationally, it has been suggested that the active SMB domain may be permitted considerable disulfide bond heterogeneity or variability, thus two alternate disulfide patterns based on 3D structures are described with 1 disulfide bond conserved in both. Phosphorylation sites are present in the extracellular medium. Expressed in the retina pigment epithelium (at protein level). Expressed in plasma (at protein level). Expressed in serum (at protein level).

The protein localises to the secreted. It localises to the extracellular space. It is found in the parasitophorous vacuole. Its function is as follows. Vitronectin is a cell adhesion and spreading factor found in serum and tissues. Vitronectin interact with glycosaminoglycans and proteoglycans. Is recognized by certain members of the integrin family and serves as a cell-to-substrate adhesion molecule. Inhibitor of the membrane-damaging effect of the terminal cytolytic complement pathway. In terms of biological role, somatomedin-B is a growth hormone-dependent serum factor with protease-inhibiting activity. The polypeptide is Vitronectin (VTN) (Homo sapiens (Human)).